Consider the following 160-residue polypeptide: Serine-protein kinase RsbW (160 aa).

It belongs to the anti-sigma-factor family.

The enzyme catalyses L-seryl-[protein] + ATP = O-phospho-L-seryl-[protein] + ADP + H(+). It carries out the reaction L-threonyl-[protein] + ATP = O-phospho-L-threonyl-[protein] + ADP + H(+). Functionally, negative regulator of sigma-B activity. Phosphorylates and inactivates its specific antagonist protein, RsbV. Upon phosphorylation of RsbV, RsbW is released and binds to sigma-B, thereby blocking its ability to form an RNA polymerase holoenzyme (E-sigma-B). The protein is Serine-protein kinase RsbW of Bacillus cereus (strain G9842).